The sequence spans 1392 residues: ENHANCER OF AG-4 protein 2 (1392 aa).

Residues 20 to 77 (LGDLVLAKVKGFPAWPAKISRPEDWDRAPDPKKYFVQFFGTEEIAFVAPPDIQAFTSE) enclose the PWWP domain. The span at 184 to 194 (ESKVKTTSPVS) shows a compositional bias: polar residues. 4 disordered regions span residues 184–354 (ESKV…STGT), 384–428 (KRQR…PAAQ), 575–613 (KKPQ…GERL), and 723–766 (QGHH…GGSL). Composition is skewed to basic and acidic residues over residues 196–215 (SLEH…DKGT), 239–258 (KEAG…DKSN), and 311–345 (LESE…KCEI). Polar residues predominate over residues 391–400 (EHATSPSFSG). A compositionally biased stretch (basic and acidic residues) spans 401–417 (SRDKSGKGHLEQKDRSS). 2 stretches are compositionally biased toward polar residues: residues 591–601 (KISSSQSQPAN) and 725–744 (HHQQ…SRNQ). The CID domain occupies 771–912 (EAAISRDAFE…RYIDDIRASG (142 aa)). 3 disordered regions span residues 957–986 (FFSS…AGER), 1014–1356 (LEME…NYQP), and 1369–1392 (PGHT…WRPA). Over residues 1059 to 1129 (EDSPPLPQES…SPPPPPPPPS (71 aa)) the composition is skewed to pro residues. Residues 1157–1175 (LSHQTYPGSMQQDRSSIFT) show a composition bias toward polar residues. Residues 1215-1225 (SSREPSSFTSS) show a composition bias toward low complexity. Polar residues-rich tracts occupy residues 1240–1255 (EASS…TPLS) and 1265–1284 (APSS…QHSY). Residues 1293 to 1306 (QRDDARRYRNEEPW) show a composition bias toward basic and acidic residues. Polar residues predominate over residues 1311–1320 (SGHSAENQNG).

As to expression, expressed in the inflorescence meristem, floral primordia, inflorescence stem, and floral pedicels. Also detected in the shoot apical meristem, stems, leaves, embryos, and roots.

The protein localises to the nucleus. In terms of biological role, transcription factor that functions as a repressor of flowering by enhancing the expression of several genes that delay flowering including FLC, FLM/MAF1, MAF2 and SVP. Also acts in the floral homeotic AGAMOUS (AG) pathway, specifically by processing the AGAMOUS pre-mRNA. Functions in association with HUA1 and HEN4 in AG pre-mRNA processing. Involved in all three aspects of the AG functions, the specification of stamen and carpel identities, the control of floral determinacy, and the spatial restriction of AP1 expression. Acts as a transcription regulator that controls anthocyanin accumulation. This Arabidopsis thaliana (Mouse-ear cress) protein is ENHANCER OF AG-4 protein 2.